The following is a 466-amino-acid chain: Vimentin (466 aa).

Composition is skewed to low complexity over residues 1 to 13 (MSTR…SYRR) and 20 to 33 (TSSR…YVTT). The disordered stretch occupies residues 1–33 (MSTRSVSSSSYRRMFGGSGTSSRPSSNRSYVTT). Residue serine 2 is modified to N-acetylserine. The head stretch occupies residues 2–95 (STRSVSSSSY…FSLADAINTE (94 aa)). Phosphoserine is present on serine 5. At serine 7 the chain carries Phosphoserine; by PKA and PKC; alternate. O-linked (GlcNAc) serine; alternate glycosylation occurs at serine 7. Residue serine 8 is modified to Phosphoserine. Residues serine 9 and serine 10 each carry the phosphoserine; by PKC modification. The residue at position 20 (threonine 20) is a Phosphothreonine. Serine 21 is modified (phosphoserine; by PKC). Position 25 is a phosphoserine; by PKA and PKC (serine 25). Serine 26 carries the post-translational modification Phosphoserine; by PKC. An O-linked (GlcNAc) threonine glycan is attached at threonine 33. An O-linked (GlcNAc) serine; alternate glycan is attached at serine 34. Position 34 is a phosphoserine; by PKC; alternate (serine 34). Serine 39 carries the post-translational modification Phosphoserine; by CaMK2, PKA, PKC and ROCK2. Serine 42 is subject to Phosphoserine; by PKC. Phosphoserine; by PKA is present on serine 47. Serine 49 carries the phosphoserine modification. Residue serine 51 is modified to Phosphoserine; by PKA and PKC. Tyrosine 53 is subject to Phosphotyrosine. A phosphoserine mark is found at serine 55 and serine 56. A Phosphotyrosine modification is found at tyrosine 61. Serine 66 is modified (phosphoserine; by PKA and PKC). Serine 72 is subject to Phosphoserine; by AURKB and ROCK2. At serine 73 the chain carries Phosphoserine. The residue at position 83 (serine 83) is a Phosphoserine; by CaMK2. Serine 87 bears the Phosphoserine mark. Residues 96–131 (FKNTRTNEKVELQELNDRFANYIDKVRFLEQQNKIL) are coil 1A. The stretch at 96-131 (FKNTRTNEKVELQELNDRFANYIDKVRFLEQQNKIL) forms a coiled coil. Residues 103–411 (EKVELQELND…KLLEGEESRI (309 aa)) enclose the IF rod domain. Residue lysine 104 forms a Glycyl lysine isopeptide (Lys-Gly) (interchain with G-Cter in SUMO2) linkage. Tyrosine 117 carries the phosphotyrosine modification. 3 positions are modified to N6-acetyllysine; alternate: lysine 120, lysine 129, and lysine 139. Lysine 120 and lysine 129 each carry N6-succinyllysine; alternate. Glycyl lysine isopeptide (Lys-Gly) (interchain with G-Cter in SUMO2); alternate cross-links involve residues lysine 120, lysine 129, and lysine 139. Residues 132–153 (LAELEQLKGQGKSRLGDLYEEE) form a linker 1 region. Phosphoserine is present on serine 144. Positions 154–245 (MRELRRQVDQ…KLHDEEIQEL (92 aa)) form a coiled coil. Positions 154–245 (MRELRRQVDQ…KLHDEEIQEL (92 aa)) are coil 1B. Lysine 168 carries the N6-acetyllysine modification. Lysine 188 carries the N6-acetyllysine; alternate modification. The residue at position 188 (lysine 188) is an N6-succinyllysine; alternate. A Phosphoserine modification is found at serine 214. Lysine 223 bears the N6-acetyllysine; alternate mark. A Glycyl lysine isopeptide (Lys-Gly) (interchain with G-Cter in SUMO2); alternate cross-link involves residue lysine 223. At serine 226 the chain carries Phosphoserine. At lysine 235 the chain carries N6-acetyllysine. The interval 246–268 (QAQIQEQHVQIDVDVSKPDLTAA) is linker 12. Lysine 262 is covalently cross-linked (Glycyl lysine isopeptide (Lys-Gly) (interchain with G-Cter in SUMO2)). The tract at residues 269-407 (LRDVRQQYES…ATYRKLLEGE (139 aa)) is coil 2. Lysine 294 is modified (N6-acetyllysine; alternate). N6-succinyllysine; alternate is present on lysine 294. Residue lysine 294 forms a Glycyl lysine isopeptide (Lys-Gly) (interchain with G-Cter in SUMO2); alternate linkage. Serine 299 carries the post-translational modification Phosphoserine. A coiled-coil region spans residues 303-407 (NRNNDALRQA…ATYRKLLEGE (105 aa)). Residue lysine 313 forms a Glycyl lysine isopeptide (Lys-Gly) (interchain with G-Cter in SUMO2) linkage. Serine 325 is modified (phosphoserine). Residues 326–329 (LTCE) carry the [IL]-x-C-x-x-[DE] motif motif. Position 373 is an N6-acetyllysine; alternate (lysine 373). Residue lysine 373 forms a Glycyl lysine isopeptide (Lys-Gly) (interchain with G-Cter in SUMO2); alternate linkage. Residues 408–466 (ESRISLPLPTFSSLNLRETNLESLPLVDTHSKRTLLIKTVETRDGQVINETSQHHDDLE) form a tail region. Phosphoserine occurs at positions 409, 412, 419, and 420. A Phosphothreonine modification is found at threonine 426. The residue at position 430 (serine 430) is a Phosphoserine. Threonine 436 is modified (phosphothreonine). A Phosphoserine modification is found at serine 438. A Glycyl lysine isopeptide (Lys-Gly) (interchain with G-Cter in SUMO2) cross-link involves residue lysine 439. An N6-acetyllysine; alternate modification is found at lysine 445. Position 445 is an N6-succinyllysine; alternate (lysine 445). Residue lysine 445 forms a Glycyl lysine isopeptide (Lys-Gly) (interchain with G-Cter in SUMO2); alternate linkage. Lysine 445 participates in a covalent cross-link: Glycyl lysine isopeptide (Lys-Gly) (interchain with G-Cter in SUMO1); alternate. A phosphothreonine mark is found at threonine 446 and threonine 458. Serine 459 is modified (phosphoserine).

The protein belongs to the intermediate filament family. In terms of assembly, homomer assembled from elementary dimers. Identified in complexes that contain VIM, EZR, AHNAK, BFSP1, BFSP2, ANK2, PLEC, PRX and spectrin. Interacts with BCAS3. Interacts with LGSN. Interacts with SYNM. Interacts (via rod region) with PLEC (via CH 1 domain). Interacts with PLEC isoform 1C. Interacts with STK33. Interacts with LARP6. Interacts with RAB8B. Interacts with TOR1A; the interaction associates TOR1A with the cytoskeleton. Interacts with TOR1AIP1. Interacts with DIAPH1. Interacts with EPPK1; interaction is dependent of higher-order structure of intermediate filament. Interacts with the non-receptor tyrosine kinase SRMS; the interaction leads to phosphorylation of VIM. Interacts with NOD2. Interacts (via head region) with CORO1C. Interacts with HDGF. Interacts with PRKCE (via phorbol-ester/DAG-type 2 domain). Interacts with BFSP2. Interacts with PPL. Interacts with PKP1 and PKP2. Interacts with SCRIB (via PDZ domains); the interaction protects SCRIB from proteasomal degradation and facilitates SCRIB localization to intermediate filaments, the interaction is reduced by cell contact inhibition. Post-translationally, phosphorylation by PKN1 inhibits the formation of filaments. Filament disassembly during mitosis is promoted by phosphorylation at Ser-55 as well as by nestin. One of the most prominent phosphoproteins in various cells of mesenchymal origin. Phosphorylation is enhanced during cell division, at which time vimentin filaments are significantly reorganized. Phosphorylated at Ser-56 by CDK5 during neutrophil secretion in the cytoplasm. Phosphorylated by STK33. Phosphorylated on tyrosine residues by SRMS. S-nitrosylation is induced by interferon-gamma and oxidatively-modified low-densitity lipoprotein (LDL(ox)) possibly implicating the iNOS-S100A8/9 transnitrosylase complex. Detected in eye lens fiber cells (at protein level). Expressed in retinal lens epithelial cells (at protein level). Expressed in Langerhans cells in the epidermis (at protein level).

It is found in the cytoplasm. The protein localises to the cytoskeleton. It localises to the nucleus matrix. Its subcellular location is the cell membrane. Vimentins are class-III intermediate filaments found in various non-epithelial cells, especially mesenchymal cells. Vimentin is attached to the nucleus, endoplasmic reticulum, and mitochondria, either laterally or terminally. Plays a role in cell directional movement, orientation, cell sheet organization and Golgi complex polarization at the cell migration front. Protects SCRIB from proteasomal degradation and facilitates its localization to intermediate filaments in a cell contact-mediated manner. Its function is as follows. Involved with LARP6 in the stabilization of type I collagen mRNAs for CO1A1 and CO1A2. In Mus musculus (Mouse), this protein is Vimentin.